The chain runs to 352 residues: Methylthioribose-1-phosphate isomerase (352 aa).

Substrate contacts are provided by residues 55–57 (RGA), arginine 98, and glutamine 201. Aspartate 242 functions as the Proton donor in the catalytic mechanism. Position 252 to 253 (252 to 253 (NK)) interacts with substrate.

The protein belongs to the eIF-2B alpha/beta/delta subunits family. MtnA subfamily.

The catalysed reaction is 5-(methylsulfanyl)-alpha-D-ribose 1-phosphate = 5-(methylsulfanyl)-D-ribulose 1-phosphate. It participates in amino-acid biosynthesis; L-methionine biosynthesis via salvage pathway; L-methionine from S-methyl-5-thio-alpha-D-ribose 1-phosphate: step 1/6. Catalyzes the interconversion of methylthioribose-1-phosphate (MTR-1-P) into methylthioribulose-1-phosphate (MTRu-1-P). In Methylococcus capsulatus (strain ATCC 33009 / NCIMB 11132 / Bath), this protein is Methylthioribose-1-phosphate isomerase.